We begin with the raw amino-acid sequence, 207 residues long: Peptidyl-prolyl cis-trans isomerase FKBP16-1, chloroplastic (207 aa).

The PPIase FKBP-type domain maps to 104–207; the sequence is GDLVELNYVC…VFEIQLLKVL (104 aa).

This sequence belongs to the FKBP-type PPIase family.

The protein localises to the plastid. The protein resides in the chloroplast thylakoid lumen. The enzyme catalyses [protein]-peptidylproline (omega=180) = [protein]-peptidylproline (omega=0). PPIases accelerate the folding of proteins. It catalyzes the cis-trans isomerization of proline imidic peptide bonds in oligopeptides. The chain is Peptidyl-prolyl cis-trans isomerase FKBP16-1, chloroplastic (FKBP16-1) from Arabidopsis thaliana (Mouse-ear cress).